Reading from the N-terminus, the 514-residue chain is Glycosyltransferase-like At3g57200 (514 aa).

The interval 1–23 is disordered; it reads MAGLYSSSSSSKPTLSSSPSSSS. A signal peptide spans 1-39; it reads MAGLYSSSSSSKPTLSSSPSSSSSSRLFLLVTLLPLSLA. 4 N-linked (GlcNAc...) asparagine glycosylation sites follow: asparagine 156, asparagine 187, asparagine 251, and asparagine 460. Residues 457 to 514 are disordered; sequence PSKNSSTADSTSGITRESSQETGKRRVLEFHLDVDGESQASAVPPQSPPGLEATQMEL. Residues 458-473 show a composition bias toward polar residues; the sequence is SKNSSTADSTSGITRE. Residues 474–490 show a composition bias toward basic and acidic residues; the sequence is SSQETGKRRVLEFHLDV.

It belongs to the glycosyltransferase 25 family.

The protein resides in the secreted. Its subcellular location is the cell wall. The protein localises to the cytoplasm. It is found in the cell membrane. Functionally, involved in the coordination between cell elongation and cellulose synthesis by promoting the expression of genes involved in cell elongation and cellulose synthesis. Acts as a regulator of plasmodesmatal permeability. Maybe a glycosyltransferase. In Arabidopsis thaliana (Mouse-ear cress), this protein is Glycosyltransferase-like At3g57200.